The primary structure comprises 100 residues: MANPKLTLNDVLIRPIITEKSFSGEEYNKYTFEVHRDASKHLIKEAIEKIFNVKVEKINVINVKPKPKRRGIAVGRTRSWKKAVVTLVEGYRIKELEGQH.

The protein belongs to the universal ribosomal protein uL23 family. In terms of assembly, part of the 50S ribosomal subunit. Contacts protein L29, and trigger factor when it is bound to the ribosome.

Its function is as follows. One of the early assembly proteins it binds 23S rRNA. One of the proteins that surrounds the polypeptide exit tunnel on the outside of the ribosome. Forms the main docking site for trigger factor binding to the ribosome. In Kosmotoga olearia (strain ATCC BAA-1733 / DSM 21960 / TBF 19.5.1), this protein is Large ribosomal subunit protein uL23.